A 1400-amino-acid chain; its full sequence is DNA-directed RNA polymerase subunit beta' (1400 aa).

4 residues coordinate Zn(2+): C70, C72, C85, and C88. Mg(2+)-binding residues include D460, D462, and D464. The Zn(2+) site is built by C814, C888, C895, and C898. The tract at residues 1368–1400 (RQAKRAEAQEGPSAEQATDNLAALLNAGFSSDE) is disordered.

Belongs to the RNA polymerase beta' chain family. As to quaternary structure, the RNAP catalytic core consists of 2 alpha, 1 beta, 1 beta' and 1 omega subunit. When a sigma factor is associated with the core the holoenzyme is formed, which can initiate transcription. It depends on Mg(2+) as a cofactor. Requires Zn(2+) as cofactor.

The catalysed reaction is RNA(n) + a ribonucleoside 5'-triphosphate = RNA(n+1) + diphosphate. Functionally, DNA-dependent RNA polymerase catalyzes the transcription of DNA into RNA using the four ribonucleoside triphosphates as substrates. The polypeptide is DNA-directed RNA polymerase subunit beta' (Vibrio parahaemolyticus serotype O3:K6 (strain RIMD 2210633)).